The sequence spans 96 residues: Prokineticin Bm8-f (96 aa).

An N-terminal signal peptide occupies residues 1–19; that stretch reads MKCFAQIVVLLLVIAFSHG. Disulfide bonds link C26/C38, C32/C50, C37/C78, C60/C86, and C80/C95.

The protein belongs to the AVIT (prokineticin) family. Expressed by the skin glands.

It is found in the secreted. Its function is as follows. Potent agonist for both PKR1/PROKR1 and PKR2/PROKR2, and inducer of a potent and long-lasting hyperalgesia. Also potentiates capsaicin-induced TRPV1 current, when tested on DRG neurons. At subnanomolar concentrations, this protein both induces potent chemotaxis of macrophages and stimulates LPS-induced production of the pro-inflammatory cytokines IL-1 and IL-12. In vivo, potently stimulates the contraction of the guinea-pig gastrointestinal (GI) smooth muscle (nanomolar concentration). This chain is Prokineticin Bm8-f, found in Bombina maxima (Giant fire-bellied toad).